The primary structure comprises 474 residues: tRNA-2-methylthio-N(6)-dimethylallyladenosine synthase (474 aa).

The MTTase N-terminal domain maps to 3–120 (KKLHIKTWGC…LPEMINSVRG (118 aa)). The [4Fe-4S] cluster site is built by cysteine 12, cysteine 49, cysteine 83, cysteine 157, cysteine 161, and cysteine 164. A Radical SAM core domain is found at 143 to 375 (RAEGPTAFVS…QERINQQAMA (233 aa)). The 64-residue stretch at 378–441 (RRMLGTTQRI…PNSLRGKVVR (64 aa)) folds into the TRAM domain.

The protein belongs to the methylthiotransferase family. MiaB subfamily. As to quaternary structure, monomer. [4Fe-4S] cluster serves as cofactor.

The protein localises to the cytoplasm. The enzyme catalyses N(6)-dimethylallyladenosine(37) in tRNA + (sulfur carrier)-SH + AH2 + 2 S-adenosyl-L-methionine = 2-methylsulfanyl-N(6)-dimethylallyladenosine(37) in tRNA + (sulfur carrier)-H + 5'-deoxyadenosine + L-methionine + A + S-adenosyl-L-homocysteine + 2 H(+). Catalyzes the methylthiolation of N6-(dimethylallyl)adenosine (i(6)A), leading to the formation of 2-methylthio-N6-(dimethylallyl)adenosine (ms(2)i(6)A) at position 37 in tRNAs that read codons beginning with uridine. This Escherichia coli (strain UTI89 / UPEC) protein is tRNA-2-methylthio-N(6)-dimethylallyladenosine synthase.